A 432-amino-acid chain; its full sequence is Tyrosine-protein phosphatase non-receptor type 1 (432 aa).

Residue methionine 1 is modified to N-acetylmethionine. The region spanning 3–277 is the Tyrosine-protein phosphatase domain; it reads MEKEFEQIDK…RFSYLAVIEG (275 aa). Phosphotyrosine is present on tyrosine 20. Serine 50 carries the phosphoserine; by PKB/AKT1, CLK1 and CLK2 modification. At tyrosine 66 the chain carries Phosphotyrosine; by EGFR. Substrate-binding positions include aspartate 181 and 215–221; that span reads CSAGIGR. Residue cysteine 215 is the Phosphocysteine intermediate of the active site. Cysteine 215 is subject to Cysteine persulfide. Cysteine 215 is modified (S-nitrosocysteine; in reversibly inhibited form). 2 positions are modified to phosphoserine; by CLK1 and CLK2: serine 242 and serine 243. Glutamine 262 provides a ligand contact to substrate. Residues 297–322 are disordered; the sequence is EDLEPPPEHVPPPPRPPKRTLEPHNG. Phosphoserine is present on residues serine 335, serine 362, and serine 364. The segment at 350–402 is disordered; the sequence is SRAPSIAVHSMSSMSQDTEVRKRMVGGGLQSAQASVPTEEELSPTEEEQKAHR. Threonine 367 is subject to Phosphothreonine.

It belongs to the protein-tyrosine phosphatase family. Non-receptor class 1 subfamily. Interacts with EPHA3 (phosphorylated); dephosphorylates EPHA3 and may regulate its trafficking and function. Interacts with MET. Interacts with NCK1. Ser-50 is the major site of phosphorylation as compared to Ser-242 and Ser-243. Activated by phosphorylation at Ser-50. In terms of processing, S-nitrosylation of Cys-215 inactivates the enzyme activity. Post-translationally, sulfhydration at Cys-215 following endoplasmic reticulum stress inactivates the enzyme activity, promoting EIF2AK3/PERK activity. In terms of tissue distribution, found in several tissues including central nervous system, liver and kidney. A high level of expression was found in the hippocampus.

Its subcellular location is the endoplasmic reticulum membrane. It carries out the reaction O-phospho-L-tyrosyl-[protein] + H2O = L-tyrosyl-[protein] + phosphate. In terms of biological role, tyrosine-protein phosphatase which acts as a regulator of endoplasmic reticulum unfolded protein response. Mediates dephosphorylation of EIF2AK3/PERK; inactivating the protein kinase activity of EIF2AK3/PERK. May play an important role in CKII- and p60c-src-induced signal transduction cascades. May regulate the EFNA5-EPHA3 signaling pathway which modulates cell reorganization and cell-cell repulsion. May also regulate the hepatocyte growth factor receptor signaling pathway through dephosphorylation of MET. This Rattus norvegicus (Rat) protein is Tyrosine-protein phosphatase non-receptor type 1 (Ptpn1).